The sequence spans 356 residues: Phenylalanine--tRNA ligase alpha subunit (356 aa).

E260 provides a ligand contact to Mg(2+).

This sequence belongs to the class-II aminoacyl-tRNA synthetase family. Phe-tRNA synthetase alpha subunit type 1 subfamily. Tetramer of two alpha and two beta subunits. Mg(2+) is required as a cofactor.

It is found in the cytoplasm. The enzyme catalyses tRNA(Phe) + L-phenylalanine + ATP = L-phenylalanyl-tRNA(Phe) + AMP + diphosphate + H(+). The polypeptide is Phenylalanine--tRNA ligase alpha subunit (Gluconacetobacter diazotrophicus (strain ATCC 49037 / DSM 5601 / CCUG 37298 / CIP 103539 / LMG 7603 / PAl5)).